We begin with the raw amino-acid sequence, 465 residues long: GTPase Der (465 aa).

EngA-type G domains follow at residues 3 to 167 and 179 to 352; these read PLVA…PEEG and IRIA…ESAN. GTP-binding positions include 9–16, 57–61, 119–122, 185–192, 232–236, and 297–300; these read GRPNVGKS, DTGGI, NKID, DTAGL, and NKWD. A KH-like domain is found at 353 to 437; the sequence is KTFTTSEVNK…PVSFIFREGT (85 aa).

Belongs to the TRAFAC class TrmE-Era-EngA-EngB-Septin-like GTPase superfamily. EngA (Der) GTPase family. As to quaternary structure, associates with the 50S ribosomal subunit.

GTPase that plays an essential role in the late steps of ribosome biogenesis. This Stenotrophomonas maltophilia (strain R551-3) protein is GTPase Der.